Consider the following 132-residue polypeptide: Homeobox protein ceh-1 (132 aa).

The segment at residues 1-60 (MRRARTAFTYEQLVALENKFKTSRYLSVVERLNLAIQLQLSETQVKIWFQNRRTKWKKHN) is a DNA-binding region (homeobox). The segment at 56–80 (WKKHNPGQDANTPQTPPSSDETQIQ) is disordered. Over residues 63–80 (QDANTPQTPPSSDETQIQ) the composition is skewed to polar residues.

The protein localises to the nucleus. This Caenorhabditis elegans protein is Homeobox protein ceh-1 (ceh-1).